A 132-amino-acid polypeptide reads, in one-letter code: uncharacterized protein (132 aa).

The interval 113-132 is disordered; it reads LDPQSPLHSPPLSTSPDSRR.

This is an uncharacterized protein from Saccharomyces cerevisiae (strain ATCC 204508 / S288c) (Baker's yeast).